The following is a 161-amino-acid chain: UPF0763 protein Cla_1130 (161 aa).

This sequence belongs to the UPF0763 family.

This is UPF0763 protein Cla_1130 from Campylobacter lari (strain RM2100 / D67 / ATCC BAA-1060).